We begin with the raw amino-acid sequence, 266 residues long: Thymidylate synthase (266 aa).

A dUMP-binding site is contributed by arginine 24. Histidine 54 lines the (6R)-5,10-methylene-5,6,7,8-tetrahydrofolate pocket. Residue 129 to 130 (RR) coordinates dUMP. The Nucleophile role is filled by cysteine 149. DUMP-binding positions include 169-172 (RSAD), asparagine 180, and 210-212 (HIY). Aspartate 172 is a binding site for (6R)-5,10-methylene-5,6,7,8-tetrahydrofolate. (6R)-5,10-methylene-5,6,7,8-tetrahydrofolate is bound at residue alanine 265.

It belongs to the thymidylate synthase family. Bacterial-type ThyA subfamily. As to quaternary structure, homodimer.

The protein resides in the cytoplasm. The enzyme catalyses dUMP + (6R)-5,10-methylene-5,6,7,8-tetrahydrofolate = 7,8-dihydrofolate + dTMP. It functions in the pathway pyrimidine metabolism; dTTP biosynthesis. Catalyzes the reductive methylation of 2'-deoxyuridine-5'-monophosphate (dUMP) to 2'-deoxythymidine-5'-monophosphate (dTMP) while utilizing 5,10-methylenetetrahydrofolate (mTHF) as the methyl donor and reductant in the reaction, yielding dihydrofolate (DHF) as a by-product. This enzymatic reaction provides an intracellular de novo source of dTMP, an essential precursor for DNA biosynthesis. The sequence is that of Thymidylate synthase from Mycobacterium bovis (strain ATCC BAA-935 / AF2122/97).